The chain runs to 397 residues: ORC1-type DNA replication protein 1 (397 aa).

Residues 67–71 (TGKTA), Tyr208, and Arg220 each bind ATP.

Belongs to the CDC6/cdc18 family.

Involved in regulation of DNA replication. The protein is ORC1-type DNA replication protein 1 (cdc6-1) of Sulfolobus acidocaldarius (strain ATCC 33909 / DSM 639 / JCM 8929 / NBRC 15157 / NCIMB 11770).